The primary structure comprises 766 residues: 5-methyltetrahydropteroyltriglutamate--homocysteine methyltransferase (766 aa).

5-methyltetrahydropteroyltri-L-glutamate is bound by residues 23–26 (RELK) and Lys-121. Residues 438 to 440 (IGS) and Glu-491 each bind L-homocysteine. L-methionine contacts are provided by residues 438-440 (IGS) and Glu-491. 5-methyltetrahydropteroyltri-L-glutamate contacts are provided by residues 522 to 523 (RC) and Trp-568. Asp-606 provides a ligand contact to L-homocysteine. Asp-606 serves as a coordination point for L-methionine. Glu-612 contributes to the 5-methyltetrahydropteroyltri-L-glutamate binding site. Zn(2+)-binding residues include His-648, Cys-650, and Glu-672. Catalysis depends on His-701, which acts as the Proton donor. Cys-733 provides a ligand contact to Zn(2+).

It belongs to the vitamin-B12 independent methionine synthase family. The cofactor is Zn(2+).

It carries out the reaction 5-methyltetrahydropteroyltri-L-glutamate + L-homocysteine = tetrahydropteroyltri-L-glutamate + L-methionine. It participates in amino-acid biosynthesis; L-methionine biosynthesis via de novo pathway; L-methionine from L-homocysteine (MetE route): step 1/1. Functionally, catalyzes the transfer of a methyl group from 5-methyltetrahydrofolate to homocysteine resulting in methionine formation. The sequence is that of 5-methyltetrahydropteroyltriglutamate--homocysteine methyltransferase from Photobacterium profundum (strain SS9).